The chain runs to 351 residues: 3-dehydroquinate synthase (351 aa).

NAD(+) is bound by residues 60 to 65, 94 to 98, 118 to 119, K131, K140, and 158 to 161; these read DGEEYK, GVISD, TT, and FLKT. E173, H239, and H256 together coordinate Zn(2+).

Belongs to the sugar phosphate cyclases superfamily. Dehydroquinate synthase family. It depends on NAD(+) as a cofactor. Requires Co(2+) as cofactor. Zn(2+) serves as cofactor.

The protein resides in the cytoplasm. It carries out the reaction 7-phospho-2-dehydro-3-deoxy-D-arabino-heptonate = 3-dehydroquinate + phosphate. Its pathway is metabolic intermediate biosynthesis; chorismate biosynthesis; chorismate from D-erythrose 4-phosphate and phosphoenolpyruvate: step 2/7. Its function is as follows. Catalyzes the conversion of 3-deoxy-D-arabino-heptulosonate 7-phosphate (DAHP) to dehydroquinate (DHQ). In Campylobacter jejuni subsp. jejuni serotype O:2 (strain ATCC 700819 / NCTC 11168), this protein is 3-dehydroquinate synthase.